The primary structure comprises 861 residues: Linoleate 9S-lipoxygenase 2 (861 aa).

Residues 29–160 form the PLAT domain; that stretch reads NALDFTDLAG…RYKSDRIFFV (132 aa). In terms of domain architecture, Lipoxygenase spans 163-861; sequence PYLPSKTPEL…GKGIPNSVSI (699 aa). The interval 212-246 is disordered; sequence EGKENVRTTLGGSAEYPYPRRGRTGRPPTRTDPKS. Positions 522, 527, 713, 717, and 861 each coordinate Fe cation.

Belongs to the lipoxygenase family. As to quaternary structure, monomer. Fe cation is required as a cofactor. Highly expressed in tubers and roots. Detected in flower buds and leaves.

Its subcellular location is the cytoplasm. The enzyme catalyses (9Z,12Z)-octadecadienoate + O2 = (9S)-hydroperoxy-(10E,12Z)-octadecadienoate. Its pathway is lipid metabolism; oxylipin biosynthesis. Plant lipoxygenases may be involved in a number of diverse aspects of plant physiology including growth and development, pest resistance, and senescence or responses to wounding. Catalyzes the hydroperoxidation of lipids containing a cis,cis-1,4-pentadiene structure. Linoleic acid is the preferred substrate, but is also active with linolenic and arachidonic acids. In Solanum tuberosum (Potato), this protein is Linoleate 9S-lipoxygenase 2 (LOX1.2).